Consider the following 483-residue polypeptide: Serine/threonine-protein phosphatase 2A regulatory subunit phr2AB (483 aa).

WD repeat units lie at residues 22 to 61 (SDAN…QSSK) and 88 to 129 (EIEE…IKQV). The interval 132-152 (SATTTGPSYNGSLASNNTRSP) is disordered. WD repeat units follow at residues 206–244 (AHAY…ECFN), 255–295 (DLTE…LCDN), 314–352 (EIIS…KPVK), and 369–410 (ENDC…DVCL). The tract at residues 421 to 443 (TKTLTTKMKLRSSKKEPKKPEDI) is disordered. Residues 433–443 (SKKEPKKPEDI) show a composition bias toward basic and acidic residues. The stretch at 449–483 (EYTKKTLHCAWHPKDNLIAVGAANTVYLYAATENK) is one WD 7 repeat.

It belongs to the phosphatase 2A regulatory subunit B family. PP2A consists of a trimeric holoenzyme, composed of a 37 kDa catalytic subunit (C subunit) and a 65 kDa constant regulatory subunit (A subunit), that associates with a variety of regulatory subunits (B subunit) such as phr2AB (B55) and psrA (B56 homolog). The trimer may partially dissociates into a core 'AC' dimer equally active compared to the trimer.

It localises to the cytoplasm. The protein localises to the cytosol. Its subcellular location is the cytoskeleton. The protein resides in the microtubule organizing center. It is found in the centrosome. Its function is as follows. The B regulatory subunit might modulate substrate selectivity and catalytic activity, and might also direct the localization of the catalytic enzyme to a particular subcellular compartment. In Dictyostelium discoideum (Social amoeba), this protein is Serine/threonine-protein phosphatase 2A regulatory subunit phr2AB (phr2aB).